The following is a 199-amino-acid chain: NAD(P)H dehydrogenase (quinone) (199 aa).

The Flavodoxin-like domain maps to 4–190 (VLVLYYSSYG…EGARHQGELV (187 aa)). Residues 10-15 (SSYGHI) and 78-80 (TRY) each bind FMN. Position 12 (Tyr12) interacts with NAD(+). Trp98 lines the substrate pocket. Residues 113-119 (STATQHG) and His134 each bind FMN.

This sequence belongs to the WrbA family. FMN is required as a cofactor.

It carries out the reaction a quinone + NADH + H(+) = a quinol + NAD(+). The enzyme catalyses a quinone + NADPH + H(+) = a quinol + NADP(+). In Paraburkholderia phymatum (strain DSM 17167 / CIP 108236 / LMG 21445 / STM815) (Burkholderia phymatum), this protein is NAD(P)H dehydrogenase (quinone).